We begin with the raw amino-acid sequence, 452 residues long: ADP-dependent glucose/glucosamine kinase (452 aa).

The region spanning 1 to 452 is the ADPK domain; that stretch reads MSWDEMYRDA…AFVSEFSLSS (452 aa). D-glucose contacts are provided by residues Asp33, Glu87, 111-112, and His174; that span reads GQ. Glu264 is a Mg(2+) binding site. Asn290 lines the ADP pocket. Residue Glu293 coordinates Mg(2+). Residues 339-340, Val426, and Gly436 each bind ADP; that span reads HT. Asp437 is a binding site for D-glucose. Residue Asp437 coordinates Mg(2+). Asp437 acts as the Proton acceptor in catalysis.

It belongs to the ADP-dependent glucokinase family. Requires Mg(2+) as cofactor.

It is found in the cytoplasm. It carries out the reaction D-glucose + ADP = D-glucose 6-phosphate + AMP + H(+). It catalyses the reaction D-glucosamine + ADP = D-glucosamine 6-phosphate + AMP + H(+). Its pathway is carbohydrate degradation; glycolysis. Functionally, catalyzes the ADP-dependent phosphorylation of D-glucose to D-glucose 6-phosphate and glucosamine to glucosamine 6-phosphate. The protein is ADP-dependent glucose/glucosamine kinase of Pyrococcus abyssi (strain GE5 / Orsay).